We begin with the raw amino-acid sequence, 150 residues long: UPF0260 protein PputGB1_4117 (150 aa).

Belongs to the UPF0260 family.

The chain is UPF0260 protein PputGB1_4117 from Pseudomonas putida (strain GB-1).